We begin with the raw amino-acid sequence, 408 residues long: MMCSRVPSEQSSGTSLLPKDGAPFSWDSLDEDGLDDSLLELSEGEEDDGDVNYTEEEIDALLKEDDPSYEQSSGEDDGGHVEKGERGSQILLDTPREKNSSYSLGPVAETPDLFKLPQLSTSSGHGPAHTKPLNRRSVLEKNLIKVTVAPFNPTVCDALLDKDETDSSKDTEKLSSLGEEMREDGLSPNESKLCTESEGISPNNSAWNGPQLSSSNNNFQQTVSDKNMPDSENPTSVFSRISDHSETPNMELSCRNGGSHKSSCEMRSLVVSTSSNKQDVLNKDSGKMKGHERRLGKVIPVLQTKTRTNVPTFSQSNLEQQKQLYLRSVIAHIEDPEDTNQGISGELCALMDQVHHMQHSKWQHPSDLTTRNYARRQKHLQRYSLTQWVDRNMRSHHRFQRLPDFSYS.

Disordered regions lie at residues 1–111 (MMCS…AETP), 162–234 (KDET…SENP), and 271–291 (VSTSSNKQDVLNKDSGKMKGH). Residues 28 to 59 (SLDEDGLDDSLLELSEGEEDDGDVNYTEEEID) are compositionally biased toward acidic residues. Composition is skewed to basic and acidic residues over residues 77–86 (DGGHVEKGER) and 162–185 (KDETDSSKDTEKLSSLGEEMREDG). A Phosphoserine modification is found at S187. Residues 188–234 (PNESKLCTESEGISPNNSAWNGPQLSSSNNNFQQTVSDKNMPDSENP) show a composition bias toward polar residues. Basic and acidic residues predominate over residues 280–291 (VLNKDSGKMKGH).

In terms of assembly, interacts with S100P. Expressed in brain, spleen, and lung. Not detected in pancreas or liver. In pancreas, expressed predominantly in islet cells and to a lesser extent in acinar cells, but not expressed in ductal cells. Up-regulated in various pancreatic ductal adenocarcinomas and pancreatic intraepithelial neoplasias. Detected in pancreatic ductal adenocarcinoma cells (at protein level). Not detected in non-neoplastic ductal epithelium (at protein level).

The protein localises to the nucleus. The sequence is that of S100P-binding protein from Homo sapiens (Human).